A 491-amino-acid polypeptide reads, in one-letter code: Ketol-acid reductoisomerase (NADP(+)) (491 aa).

Residues 15 to 208 (AQLGKCRFMG…GGHRAGVLES (194 aa)) form the KARI N-terminal Rossmann domain. NADP(+) is bound by residues 45 to 48 (CGAQ), arginine 68, arginine 76, serine 78, and 108 to 110 (DKQ). The active site involves histidine 132. Glycine 158 is an NADP(+) binding site. 2 KARI C-terminal knotted domains span residues 209–344 (SFVA…TAPQ) and 345–484 (YEGK…MTDM). Residues aspartate 217, glutamate 221, glutamate 389, and glutamate 393 each coordinate Mg(2+). A substrate-binding site is contributed by serine 414.

Belongs to the ketol-acid reductoisomerase family. It depends on Mg(2+) as a cofactor.

The enzyme catalyses (2R)-2,3-dihydroxy-3-methylbutanoate + NADP(+) = (2S)-2-acetolactate + NADPH + H(+). It carries out the reaction (2R,3R)-2,3-dihydroxy-3-methylpentanoate + NADP(+) = (S)-2-ethyl-2-hydroxy-3-oxobutanoate + NADPH + H(+). It participates in amino-acid biosynthesis; L-isoleucine biosynthesis; L-isoleucine from 2-oxobutanoate: step 2/4. Its pathway is amino-acid biosynthesis; L-valine biosynthesis; L-valine from pyruvate: step 2/4. Involved in the biosynthesis of branched-chain amino acids (BCAA). Catalyzes an alkyl-migration followed by a ketol-acid reduction of (S)-2-acetolactate (S2AL) to yield (R)-2,3-dihydroxy-isovalerate. In the isomerase reaction, S2AL is rearranged via a Mg-dependent methyl migration to produce 3-hydroxy-3-methyl-2-ketobutyrate (HMKB). In the reductase reaction, this 2-ketoacid undergoes a metal-dependent reduction by NADPH to yield (R)-2,3-dihydroxy-isovalerate. The protein is Ketol-acid reductoisomerase (NADP(+)) of Escherichia fergusonii (strain ATCC 35469 / DSM 13698 / CCUG 18766 / IAM 14443 / JCM 21226 / LMG 7866 / NBRC 102419 / NCTC 12128 / CDC 0568-73).